A 763-amino-acid chain; its full sequence is U3 small nucleolar RNA-associated protein 25 homolog (763 aa).

The interval 1–164 is disordered; the sequence is MGKRRSRGRS…SQKSSEEFTD (164 aa). Promotes p53/TP53 degradation regions lie at residues 1–190 and 580–642; these read MGKR…SQRT and VQLP…KKEE. Ser-10 bears the Phosphoserine mark. Residues 25 to 43 show a composition bias toward basic and acidic residues; the sequence is RDFGEEHPFYDRVSKKEVK. Phosphoserine is present on residues Ser-52, Ser-60, and Ser-64. The span at 54–70 shows a compositional bias: basic and acidic residues; the sequence is DSSHSESESESEQEHVS. Residues 84–119 are compositionally biased toward acidic residues; that stretch reads EEEEEEEEEEEEEEEDKEEVDDSAVGDSEMNGEDGG. Positions 643 to 704 are represses p53/TP53 degradation; sequence LNFTHICEYT…YELPTYAHFY (62 aa).

It belongs to the UTP25 family. As to quaternary structure, interacts with CAPN3; the interaction is required for CAPN3 translocation to the nucleolus. Post-translationally, phosphorylated. Phosphorylation is required to promote p53/TP53 degradation in the nucleolus which promotes cell cycle progression and liver development.

It localises to the nucleus. Its subcellular location is the nucleolus. Functionally, component of the ribosomal small subunit processome for the biogenesis of ribosomes, functions in pre-ribosomal RNA (pre-rRNA) processing. Essential for embryonic development in part through the regulation of p53 pathway. Controls the expansion growth of digestive organs and liver. Also involved in the sympathetic neuronal development. Mediates, with CAPN3, the proteasome-independent degradation of p53/TP53. This Rattus norvegicus (Rat) protein is U3 small nucleolar RNA-associated protein 25 homolog.